Reading from the N-terminus, the 359-residue chain is sn-1 acyl-lipid omega-3 desaturase (ferredoxin) (359 aa).

A run of 2 helical transmembrane segments spans residues 44–64 (LGYFFLDVGLIAGFYALAAYL) and 67–87 (WFFYPIFWLIQGTLFWSLFVV). The Histidine box-1 motif lies at 89 to 93 (HDCGH). Positions 125–129 (HRTHH) match the Histidine box-2 motif. 3 helical membrane-spanning segments follow: residues 153 to 173 (AWYEKLLRFYLPLIAYPIYLF), 206 to 226 (LAAFVGFLGFLTWQFGWLFLL), and 228 to 248 (FYVAPYLVFVVWLDLVTFLHH). The Histidine box-3 motif lies at 291–295 (HHIFS).

This sequence belongs to the fatty acid desaturase type 2 family. Fe(2+) is required as a cofactor.

Its subcellular location is the membrane. The catalysed reaction is a 1-[(9Z,12Z)-octadecdienoyl]-2-acyl-glycerolipid + 2 reduced [2Fe-2S]-[ferredoxin] + O2 + 2 H(+) = a 1-[(9Z,12Z,15Z)-octadectrienoyl]-2-acyl-glycerolipid + 2 oxidized [2Fe-2S]-[ferredoxin] + 2 H2O. It catalyses the reaction a 1-[(6Z,9Z,12Z)-octadectrienoyl]-2-acyl-glycerolipid + 2 reduced [2Fe-2S]-[ferredoxin] + O2 + 2 H(+) = a 1-[(6Z,9Z,12Z,15Z)-octadectetraenoyl]-2-acyl-glycerolipid + 2 oxidized [2Fe-2S]-[ferredoxin] + 2 H2O. Its pathway is lipid metabolism; polyunsaturated fatty acid biosynthesis. Its function is as follows. Desaturase involved in fatty acid biosynthesis. Introduces a double bond at carbon 15 of linoleoyl and gamma-linolenoyl groups attached to the sn-1 position of the glycerol moiety of membrane glycerolipids. The sequence is that of sn-1 acyl-lipid omega-3 desaturase (ferredoxin) from Synechocystis sp. (strain ATCC 27184 / PCC 6803 / Kazusa).